The following is a 149-amino-acid chain: Nucleoside diphosphate kinase (149 aa).

Residues Lys11, Phe59, Arg87, Thr93, Arg104, and Asn114 each contribute to the ATP site. His117 functions as the Pros-phosphohistidine intermediate in the catalytic mechanism.

Belongs to the NDK family. In terms of assembly, homotetramer. Mg(2+) is required as a cofactor.

It is found in the cytoplasm. It catalyses the reaction a 2'-deoxyribonucleoside 5'-diphosphate + ATP = a 2'-deoxyribonucleoside 5'-triphosphate + ADP. It carries out the reaction a ribonucleoside 5'-diphosphate + ATP = a ribonucleoside 5'-triphosphate + ADP. Functionally, major role in the synthesis of nucleoside triphosphates other than ATP. The ATP gamma phosphate is transferred to the NDP beta phosphate via a ping-pong mechanism, using a phosphorylated active-site intermediate. This chain is Nucleoside diphosphate kinase, found in Treponema pallidum (strain Nichols).